The following is a 321-amino-acid chain: uncharacterized protein (321 aa).

9 helical membrane passes run 10-28 (LWCS…EMSI), 41-63 (IALY…IWIY), 94-111 (NVAM…SMVH), 116-138 (LFYG…VWLL), 143-165 (FLFY…SNGV), 200-222 (NGVI…DIIF), 237-259 (PFII…VILA), 266-283 (YIIK…SIKI), and 293-315 (IMLS…KFFF).

The protein belongs to the TerC family.

The protein resides in the cell membrane. This is an uncharacterized protein from Buchnera aphidicola subsp. Baizongia pistaciae (strain Bp).